A 253-amino-acid polypeptide reads, in one-letter code: 5'-nucleotidase SurE (253 aa).

Positions 8, 9, 40, and 97 each coordinate a divalent metal cation.

This sequence belongs to the SurE nucleotidase family. The cofactor is a divalent metal cation.

The protein resides in the cytoplasm. It catalyses the reaction a ribonucleoside 5'-phosphate + H2O = a ribonucleoside + phosphate. Its function is as follows. Nucleotidase that shows phosphatase activity on nucleoside 5'-monophosphates. The chain is 5'-nucleotidase SurE from Desulforamulus reducens (strain ATCC BAA-1160 / DSM 100696 / MI-1) (Desulfotomaculum reducens).